The chain runs to 215 residues: Cytochrome b6 (215 aa).

A helical transmembrane segment spans residues 32-52 (IFYCLGGITLTCFLVQVATGF). C35 serves as a coordination point for heme c. Heme b contacts are provided by H86 and H100. 3 helical membrane passes run 90–110 (ASMM…TGGF), 116–136 (LTWV…VTGY), and 186–206 (LHTF…FLMI). Heme b contacts are provided by H187 and H202.

The protein belongs to the cytochrome b family. PetB subfamily. In terms of assembly, the 4 large subunits of the cytochrome b6-f complex are cytochrome b6, subunit IV (17 kDa polypeptide, PetD), cytochrome f and the Rieske protein, while the 4 small subunits are PetG, PetL, PetM and PetN. The complex functions as a dimer. It depends on heme b as a cofactor. Heme c serves as cofactor.

The protein localises to the plastid. It localises to the chloroplast thylakoid membrane. Its function is as follows. Component of the cytochrome b6-f complex, which mediates electron transfer between photosystem II (PSII) and photosystem I (PSI), cyclic electron flow around PSI, and state transitions. The protein is Cytochrome b6 of Hordeum vulgare (Barley).